Consider the following 322-residue polypeptide: HPr kinase/phosphorylase (322 aa).

Residues histidine 146 and lysine 167 contribute to the active site. 161–168 (GDSGLGKS) is an ATP binding site. A Mg(2+)-binding site is contributed by serine 168. The active-site Proton acceptor; for phosphorylation activity. Proton donor; for dephosphorylation activity is the aspartate 185. Residues 209 to 218 (LEVRGLGLLD) are important for the catalytic mechanism of both phosphorylation and dephosphorylation. Residue glutamate 210 coordinates Mg(2+). The active site involves arginine 250. An important for the catalytic mechanism of dephosphorylation region spans residues 271 to 276 (QVAAGR).

This sequence belongs to the HPrK/P family. As to quaternary structure, homohexamer. Mg(2+) serves as cofactor.

The catalysed reaction is [HPr protein]-L-serine + ATP = [HPr protein]-O-phospho-L-serine + ADP + H(+). It carries out the reaction [HPr protein]-O-phospho-L-serine + phosphate + H(+) = [HPr protein]-L-serine + diphosphate. Functionally, catalyzes the ATP- as well as the pyrophosphate-dependent phosphorylation of a specific serine residue in HPr, a phosphocarrier protein of the phosphoenolpyruvate-dependent sugar phosphotransferase system (PTS). HprK/P also catalyzes the pyrophosphate-producing, inorganic phosphate-dependent dephosphorylation (phosphorolysis) of seryl-phosphorylated HPr (P-Ser-HPr). The chain is HPr kinase/phosphorylase from Burkholderia lata (strain ATCC 17760 / DSM 23089 / LMG 22485 / NCIMB 9086 / R18194 / 383).